A 143-amino-acid chain; its full sequence is MDIQTILEKTLPGLGYELVDFELAAQGTLRVFIDKEGGITVEDCATVSNHLSRVFMVEDIGYKNLEISSPGLDRPLKKAADFVRFAGQNAKIKTRLPIGGQKNFIGKIEGCENDTVTVSFDGKTVQIELGNIDKARLRPEFKF.

Belongs to the RimP family.

It is found in the cytoplasm. Its function is as follows. Required for maturation of 30S ribosomal subunits. The polypeptide is Ribosome maturation factor RimP (Neisseria gonorrhoeae (strain ATCC 700825 / FA 1090)).